Consider the following 118-residue polypeptide: MKSDKSNLEVRALAKHIRMSAHKARRVVNQIRGRSYEQALMILEFMPYRACYPILQLVSSAAANANHNLNLNRANLIISEAKVDEGPVLKRFQPRAQGRGYPIHKPTCHITITVKNKN.

The protein belongs to the universal ribosomal protein uL22 family. Part of the 50S ribosomal subunit.

Its subcellular location is the plastid. It is found in the chloroplast. This protein binds specifically to 23S rRNA. Its function is as follows. The globular domain of the protein is located near the polypeptide exit tunnel on the outside of the subunit, while an extended beta-hairpin is found that lines the wall of the exit tunnel in the center of the 70S ribosome. The protein is Large ribosomal subunit protein uL22c (rpl22) of Physcomitrium patens (Spreading-leaved earth moss).